Consider the following 214-residue polypeptide: Large ribosomal subunit protein uL3 (214 aa).

This sequence belongs to the universal ribosomal protein uL3 family. Part of the 50S ribosomal subunit. Forms a cluster with proteins L14 and L19.

Its function is as follows. One of the primary rRNA binding proteins, it binds directly near the 3'-end of the 23S rRNA, where it nucleates assembly of the 50S subunit. This Streptomyces coelicolor (strain ATCC BAA-471 / A3(2) / M145) protein is Large ribosomal subunit protein uL3.